The following is a 232-amino-acid chain: Fibrillarin-like rRNA/tRNA 2'-O-methyltransferase (232 aa).

Residues 89–90 (TT), 108–109 (EF), 133–134 (DA), and 153–156 (DIAQ) contribute to the S-adenosyl-L-methionine site.

The protein belongs to the methyltransferase superfamily. Fibrillarin family. In terms of assembly, interacts with nop5. Component of box C/D small ribonucleoprotein (sRNP) particles that contain rpl7ae, FlpA and nop5, plus a guide RNA.

Functionally, involved in pre-rRNA and tRNA processing. Utilizes the methyl donor S-adenosyl-L-methionine to catalyze the site-specific 2'-hydroxyl methylation of ribose moieties in rRNA and tRNA. Site specificity is provided by a guide RNA that base pairs with the substrate. Methylation occurs at a characteristic distance from the sequence involved in base pairing with the guide RNA. The protein is Fibrillarin-like rRNA/tRNA 2'-O-methyltransferase of Methanopyrus kandleri (strain AV19 / DSM 6324 / JCM 9639 / NBRC 100938).